Here is a 128-residue protein sequence, read N- to C-terminus: NADPH-dependent 7-cyano-7-deazaguanine reductase (128 aa).

Catalysis depends on C34, which acts as the Thioimide intermediate. D41 serves as the catalytic Proton donor. Residues 56–58 and 75–76 contribute to the substrate site; these read IEL and HE.

Belongs to the GTP cyclohydrolase I family. QueF type 1 subfamily.

It localises to the cytoplasm. The enzyme catalyses 7-aminomethyl-7-carbaguanine + 2 NADP(+) = 7-cyano-7-deazaguanine + 2 NADPH + 3 H(+). The protein operates within tRNA modification; tRNA-queuosine biosynthesis. Functionally, catalyzes the NADPH-dependent reduction of 7-cyano-7-deazaguanine (preQ0) to 7-aminomethyl-7-deazaguanine (preQ1). This is NADPH-dependent 7-cyano-7-deazaguanine reductase from Ruthia magnifica subsp. Calyptogena magnifica.